Here is a 313-residue protein sequence, read N- to C-terminus: Serine/threonine-protein kinase SZE1 (313 aa).

Gly-2 carries the N-myristoyl glycine lipid modification. The Protein kinase domain occupies 43-311 (MELGESLGYI…EVLDNLNAIA (269 aa)). ATP is bound by residues 49–57 (LGYINPKTL) and Lys-71.

The protein belongs to the protein kinase superfamily. Ser/Thr protein kinase family. In terms of assembly, component of an immune signaling complex made of, at least, SZE1, BKN2/SZE2, ZAR1 and ZED1. Interacts directly with ZED1, ZAR1 and Pseudomonas syringae HOPZ1A at the plasma membrane. In terms of processing, N-terminal myristoylation is critical for plasma membrane localization and implication in defense responses. Autophosphorylated. As to expression, expressed in roots, seedlings, rosette leaves, floral organs, siliques and inflorescence stems.

It is found in the cell membrane. It catalyses the reaction L-seryl-[protein] + ATP = O-phospho-L-seryl-[protein] + ADP + H(+). The catalysed reaction is L-threonyl-[protein] + ATP = O-phospho-L-threonyl-[protein] + ADP + H(+). Functionally, together with BKN2/SZE2 and ZED1, required for effector-triggered immunity (e.g. Pseudomonas syringae effector type III HopZ1a) via the activation of ZAR1, thus being essential for resistance against P.syringae pv. tomato DC3000 expressing HopZ1a. This chain is Serine/threonine-protein kinase SZE1, found in Arabidopsis thaliana (Mouse-ear cress).